A 137-amino-acid chain; its full sequence is Large ribosomal subunit protein uL16 (137 aa).

It belongs to the universal ribosomal protein uL16 family. In terms of assembly, part of the 50S ribosomal subunit.

Binds 23S rRNA and is also seen to make contacts with the A and possibly P site tRNAs. In Methylococcus capsulatus (strain ATCC 33009 / NCIMB 11132 / Bath), this protein is Large ribosomal subunit protein uL16.